Reading from the N-terminus, the 447-residue chain is Pyruvate kinase (447 aa).

A substrate-binding site is contributed by R33. Residues N35, S37, and D61 each coordinate K(+). Residue 35 to 38 (NMSH) participates in ATP binding. R68 contributes to the ATP binding site. E203 contributes to the Mg(2+) binding site. Substrate contacts are provided by G226, D227, and T259. D227 provides a ligand contact to Mg(2+).

The protein belongs to the pyruvate kinase family. In terms of assembly, homotetramer. It depends on Mg(2+) as a cofactor. Requires K(+) as cofactor.

The enzyme catalyses pyruvate + ATP = phosphoenolpyruvate + ADP + H(+). The protein operates within carbohydrate degradation; glycolysis; pyruvate from D-glyceraldehyde 3-phosphate: step 5/5. The polypeptide is Pyruvate kinase (Methanocaldococcus jannaschii (strain ATCC 43067 / DSM 2661 / JAL-1 / JCM 10045 / NBRC 100440) (Methanococcus jannaschii)).